Consider the following 126-residue polypeptide: Small ribosomal subunit protein uS13 (126 aa).

A disordered region spans residues 92–126; it reads HRRGLPVRGQRTKTNARTRKGPKKTVAGKKKATRK.

Belongs to the universal ribosomal protein uS13 family. Part of the 30S ribosomal subunit. Forms a loose heterodimer with protein S19. Forms two bridges to the 50S subunit in the 70S ribosome.

Functionally, located at the top of the head of the 30S subunit, it contacts several helices of the 16S rRNA. In the 70S ribosome it contacts the 23S rRNA (bridge B1a) and protein L5 of the 50S subunit (bridge B1b), connecting the 2 subunits; these bridges are implicated in subunit movement. Contacts the tRNAs in the A and P-sites. This chain is Small ribosomal subunit protein uS13, found in Deinococcus deserti (strain DSM 17065 / CIP 109153 / LMG 22923 / VCD115).